Here is a 673-residue protein sequence, read N- to C-terminus: Forkhead box protein O3 (673 aa).

The tract at residues 1-153 (MAEAPASPAP…SGQPRKCSSR (153 aa)) is disordered. Ser-30 is subject to Phosphoserine; by AMPK. Thr-32 bears the Phosphothreonine; by PKB/AKT1 mark. Lys-46 bears the N6-methyllysine mark. The span at 57-68 (IPEEEDDEDDED) shows a compositional bias: acidic residues. Gly residues predominate over residues 79–89 (IGGGGGSGTLG). Positions 80–108 (GGGGGSGTLGSGLLLEDSARVLAPGGQDP) are required for mitochondrial import. Residue Lys-149 is modified to N6-methyllysine. The fork-head DNA-binding region spans 157-251 (WGNLSYADLI…KSGKAPRRRA (95 aa)). A Phosphothreonine; by AMPK modification is found at Thr-179. The residue at position 209 (Ser-209) is a Phosphoserine; by STK4/MST1. At Ser-215 the chain carries Phosphoserine; by MAPKAPK5. The residue at position 230 (Lys-230) is an N6-methyllysine. Positions 231 to 302 (SSWWIINPDG…GSPTSRSSDE (72 aa)) are disordered. At Lys-242 the chain carries N6-acetyllysine. Positions 242–259 (KSGKAPRRRAVSMDNSNK) match the Nuclear localization signal motif. Ser-253 carries the post-translational modification Phosphoserine; by PKB/AKT1 and MAPKAPK5. The span at 261 to 272 (TKSRGRAAKKKA) shows a compositional bias: basic residues. N6-methyllysine is present on residues Lys-262 and Lys-271. 2 positions are modified to phosphoserine: Ser-280 and Ser-284. Residues 283–298 (DSPSQLSKWPGSPTSR) are compositionally biased toward polar residues. An N6-methyllysine modification is found at Lys-290. Position 294 is a phosphoserine (Ser-294). Residue Ser-299 is modified to Phosphoserine; by CaMK2A. The tract at residues 300–673 (SDELDAWTDF…QASSQSWVPG (374 aa)) is mediates interaction with CHUK/IKKA and IKBKB/IKKB. Phosphoserine is present on Ser-311. Residue Ser-315 is modified to Phosphoserine; by SGK1. A phosphoserine; by AMPK mark is found at Ser-399 and Ser-413. N6-methyllysine is present on Lys-419. The residue at position 421 (Ser-421) is a Phosphoserine. A disordered region spans residues 536-587 (HQHQTQGALGGSRALSNSVSNMGLSESSSLGSAKHQQQSPVSQSMQTLSDSL). The span at 549–582 (ALSNSVSNMGLSESSSLGSAKHQQQSPVSQSMQT) shows a compositional bias: polar residues. The residue at position 551 (Ser-551) is a Phosphoserine; by MAPKAPK5. Residue Ser-555 is modified to Phosphoserine; by AMPK and MAPKAPK5. Phosphoserine; by AMPK is present on residues Ser-588 and Ser-626. Ser-644 is subject to Phosphoserine; by IKKB.

As to quaternary structure, upon metabolic stress, forms a complex composed of FOXO3, SIRT3 and mitochondrial RNA polymerase POLRMT; the complex is recruited to mtDNA in a SIRT3-dependent manner. Also forms a complex composed of FOXO3, SIRT3, TFAM and POLRMT. Interacts with SIRT2; the interaction occurs independently of SIRT2 deacetylase activity. Interacts with YWHAB/14-3-3-beta and YWHAZ/14-3-3-zeta, which are required for cytosolic sequestration. Upon oxidative stress, interacts with STK4/MST1, which disrupts interaction with YWHAB/14-3-3-beta and leads to nuclear translocation. Interacts with PIM1. Interacts with DDIT3/CHOP. Interacts (deacetylated form) with SKP2. Interacts with CHUK and IKBKB. Interacts with CAMK2A, CAMK2B and calcineurin A. Interacts with NUPR1; this interaction represses FOXO3 transactivation. In the presence of survival factors such as IGF1, phosphorylated on Thr-32 and Ser-253 by AKT1/PKB. This phosphorylated form then interacts with 14-3-3 proteins and is retained in the cytoplasm. Survival factor withdrawal induces dephosphorylation and promotes translocation to the nucleus where the dephosphorylated protein induces transcription of target genes and triggers apoptosis. Although AKT1/PKB doesn't appear to phosphorylate Ser-315 directly, it may activate other kinases that trigger phosphorylation at this residue. Phosphorylated by STK4/MST1 on Ser-209 upon oxidative stress, which leads to dissociation from YWHAB/14-3-3-beta and nuclear translocation. Phosphorylated by PIM1. Phosphorylation by AMPK leads to the activation of transcriptional activity without affecting subcellular localization. In response to metabolic stress, phosphorylated by AMPK on Ser-30 which mediates FOXO3 mitochondrial translocation. Phosphorylation by MAPKAPK5 promotes nuclear localization and DNA-binding, leading to induction of miR-34b and miR-34c expression, 2 post-transcriptional regulators of MYC that bind to the 3'UTR of MYC transcript and prevent its translation. Phosphorylated by CHUK/IKKA and IKBKB/IKKB. TNF-induced inactivation of FOXO3 requires its phosphorylation at Ser-644 by IKBKB/IKKB which promotes FOXO3 retention in the cytoplasm, polyubiquitination and ubiquitin-mediated proteasomal degradation. May be dephosphorylated by calcineurin A on Ser-299 which abolishes FOXO3 transcriptional activity. In cancer cells, ERK mediated-phosphorylation of Ser-12 is required for mitochondrial translocation of FOXO3 in response to metabolic stress or chemotherapeutic agents. Phosphorylation at Ser-253 promotes its degradation by the proteasome. Dephosphorylation at Ser-253 by protein phosphatase 2A (PPP2CA) promotes its stabilization; interaction with PPP2CA is enhanced by AMBRA1. Post-translationally, deacetylation by SIRT1 or SIRT2 stimulates interaction of FOXO3 with SKP2 and facilitates SCF(SKP2)-mediated FOXO3 ubiquitination and proteasomal degradation. Deacetylation by SIRT2 stimulates FOXO3-mediated transcriptional activity in response to oxidative stress. Deacetylated by SIRT3. Deacetylation by SIRT3 stimulates FOXO3-mediated mtDNA transcriptional activity in response to metabolic stress. In terms of processing, heavily methylated by SET9 which decreases stability, while moderately increasing transcriptional activity. The main methylation site is Lys-271. Methylation doesn't affect subcellular location. Polyubiquitinated. Ubiquitinated by a SCF complex containing SKP2, leading to proteasomal degradation. Post-translationally, the N-terminus is cleaved following import into the mitochondrion. As to expression, ubiquitous.

It is found in the cytoplasm. The protein resides in the cytosol. Its subcellular location is the nucleus. The protein localises to the mitochondrion matrix. It localises to the mitochondrion outer membrane. Its function is as follows. Transcriptional activator that recognizes and binds to the DNA sequence 5'-[AG]TAAA[TC]A-3' and regulates different processes, such as apoptosis and autophagy. Acts as a positive regulator of autophagy in skeletal muscle: in starved cells, enters the nucleus following dephosphorylation and binds the promoters of autophagy genes, such as GABARAP1L, MAP1LC3B and ATG12, thereby activating their expression, resulting in proteolysis of skeletal muscle proteins. Triggers apoptosis in the absence of survival factors, including neuronal cell death upon oxidative stress. Participates in post-transcriptional regulation of MYC: following phosphorylation by MAPKAPK5, promotes induction of miR-34b and miR-34c expression, 2 post-transcriptional regulators of MYC that bind to the 3'UTR of MYC transcript and prevent its translation. In response to metabolic stress, translocates into the mitochondria where it promotes mtDNA transcription. In response to metabolic stress, translocates into the mitochondria where it promotes mtDNA transcription. Also acts as a key regulator of chondrogenic commitment of skeletal progenitor cells in response to lipid availability: when lipids levels are low, translocates to the nucleus and promotes expression of SOX9, which induces chondrogenic commitment and suppresses fatty acid oxidation. Also acts as a key regulator of regulatory T-cells (Treg) differentiation by activating expression of FOXP3. The sequence is that of Forkhead box protein O3 from Homo sapiens (Human).